A 367-amino-acid chain; its full sequence is 3-isopropylmalate dehydrogenase (367 aa).

77–90 provides a ligand contact to NAD(+); sequence GPKYDDLDFSVKPE. The substrate site is built by R97, R107, R135, and D224. Residues D224, D248, and D252 each coordinate Mg(2+). 287–299 is a binding site for NAD(+); the sequence is GSAPDIAGQGKAN.

Belongs to the isocitrate and isopropylmalate dehydrogenases family. LeuB type 1 subfamily. As to quaternary structure, homodimer. Requires Mg(2+) as cofactor. The cofactor is Mn(2+).

The protein resides in the cytoplasm. The enzyme catalyses (2R,3S)-3-isopropylmalate + NAD(+) = 4-methyl-2-oxopentanoate + CO2 + NADH. It functions in the pathway amino-acid biosynthesis; L-leucine biosynthesis; L-leucine from 3-methyl-2-oxobutanoate: step 3/4. In terms of biological role, catalyzes the oxidation of 3-carboxy-2-hydroxy-4-methylpentanoate (3-isopropylmalate) to 3-carboxy-4-methyl-2-oxopentanoate. The product decarboxylates to 4-methyl-2 oxopentanoate. The protein is 3-isopropylmalate dehydrogenase of Ruegeria pomeroyi (strain ATCC 700808 / DSM 15171 / DSS-3) (Silicibacter pomeroyi).